Here is a 396-residue protein sequence, read N- to C-terminus: Decapping and exoribonuclease protein (396 aa).

Basic and acidic residues predominate over residues 1-20 (MDPRGTKRGAEKTEVAEPRN). The interval 1 to 37 (MDPRGTKRGAEKTEVAEPRNKLPRPAPSLPTDPALYS) is disordered. Residues R58, E101, and 131-133 (WRG) each bind substrate. Mg(2+) is bound at residue E192. Substrate is bound by residues C217 and E234. 4 residues coordinate Mg(2+): E234, D236, E253, and L254. Substrate-binding residues include K255 and Q280. A Phosphothreonine modification is found at T392. S394 carries the phosphoserine modification.

It belongs to the DXO/Dom3Z family. Mg(2+) serves as cofactor. As to expression, ubiquitously expressed.

The protein resides in the nucleus. The catalysed reaction is a 5'-end triphospho-ribonucleoside in mRNA + H2O = a 5'-end phospho-ribonucleoside in mRNA + diphosphate + H(+). It catalyses the reaction a 5'-end NAD(+)-phospho-ribonucleoside in mRNA + H2O = a 5'-end phospho-ribonucleoside in mRNA + NAD(+) + H(+). It carries out the reaction a 5'-end NAD(+)-phospho-ribonucleoside in snoRNA + H2O = a 5'-end phospho-ribonucleoside in snoRNA + NAD(+) + H(+). The enzyme catalyses a 5'-end (N(7)-methyl 5'-triphosphoguanosine)-ribonucleoside-ribonucleotide in mRNA + H2O = a (N(7)-methyl 5'-triphosphoguanosine)-nucleoside + a 5'-end phospho-ribonucleoside in mRNA + H(+). The catalysed reaction is a 5'-end FAD-phospho-ribonucleoside in mRNA + H2O = a 5'-end phospho-ribonucleoside in mRNA + FAD + H(+). It catalyses the reaction a 5'-end CoA-ribonucleoside in mRNA + H2O = 3'-dephospho-CoA + a 5'-end phospho-ribonucleoside in mRNA + H(+). Functionally, decapping enzyme for NAD-capped RNAs: specifically hydrolyzes the nicotinamide adenine dinucleotide (NAD) cap from a subset of RNAs by removing the entire NAD moiety from the 5'-end of an NAD-capped RNA. The NAD-cap is present at the 5'-end of some RNAs and snoRNAs. In contrast to the canonical 5'-end N7 methylguanosine (m7G) cap, the NAD cap promotes mRNA decay. Preferentially acts on NAD-capped transcripts in response to environmental stress. Also acts as a non-canonical decapping enzyme that removes the entire cap structure of m7G capped or incompletely capped RNAs and mediates their subsequent degradation. Specifically degrades pre-mRNAs with a defective 5'-end m7G cap and is part of a pre-mRNA capping quality control. Has decapping activity toward incomplete 5'-end m7G cap mRNAs such as unmethylated 5'-end-capped RNA (cap0), while it has no activity toward 2'-O-ribose methylated m7G cap (cap1). In contrast to canonical decapping enzymes DCP2 and NUDT16, which cleave the cap within the triphosphate linkage, the decapping activity releases the entire cap structure GpppN and a 5'-end monophosphate RNA. Also has 5'-3' exoribonuclease activities: The 5'-end monophosphate RNA is then degraded by the 5'-3' exoribonuclease activity, enabling this enzyme to decap and degrade incompletely capped mRNAs. Also possesses RNA 5'-pyrophosphohydrolase activity by hydrolyzing the 5'-end triphosphate to release pyrophosphates. Exhibits decapping activity towards FAD-capped RNAs. Exhibits decapping activity towards dpCoA-capped RNAs in vitro. The sequence is that of Decapping and exoribonuclease protein from Homo sapiens (Human).